Reading from the N-terminus, the 505-residue chain is Catalase (505 aa).

Catalysis depends on residues H58 and N131. Y341 is a heme binding site.

Belongs to the catalase family. Requires heme as cofactor.

The catalysed reaction is 2 H2O2 = O2 + 2 H2O. Decomposes hydrogen peroxide into water and oxygen; serves to protect cells from the toxic effects of hydrogen peroxide. In Methanosarcina barkeri (strain Fusaro / DSM 804), this protein is Catalase (kat).